Consider the following 303-residue polypeptide: Glycine--tRNA ligase alpha subunit (303 aa).

This sequence belongs to the class-II aminoacyl-tRNA synthetase family. In terms of assembly, tetramer of two alpha and two beta subunits.

The protein localises to the cytoplasm. The catalysed reaction is tRNA(Gly) + glycine + ATP = glycyl-tRNA(Gly) + AMP + diphosphate. The polypeptide is Glycine--tRNA ligase alpha subunit (Klebsiella pneumoniae subsp. pneumoniae (strain ATCC 700721 / MGH 78578)).